Reading from the N-terminus, the 278-residue chain is N-terminal Xaa-Pro-Lys N-methyltransferase 2 (278 aa).

Residues G123, R128, D145, L174 to Q175, Q190, and H195 each bind S-adenosyl-L-methionine.

It belongs to the methyltransferase superfamily. NTM1 family.

Its subcellular location is the nucleus. It catalyses the reaction N-terminal L-alanyl-L-prolyl-L-lysyl-[protein] + S-adenosyl-L-methionine = N-terminal N-methyl-L-alanyl-L-prolyl-L-lysyl-[protein] + S-adenosyl-L-homocysteine + H(+). It carries out the reaction N-terminal L-prolyl-L-prolyl-L-lysyl-[protein] + S-adenosyl-L-methionine = N-terminal N-methyl-L-prolyl-L-prolyl-L-lysyl-[protein] + S-adenosyl-L-homocysteine + H(+). The enzyme catalyses N-terminal L-seryl-L-prolyl-L-lysyl-[protein] + S-adenosyl-L-methionine = N-terminal N-methyl-L-seryl-L-prolyl-L-lysyl-[protein] + S-adenosyl-L-homocysteine + H(+). Functionally, alpha N-methyltransferase that methylates the N-terminus of target proteins containing the N-terminal motif [Ala/Pro/Ser]-Pro-Lys when the initiator Met is cleaved. Specifically catalyzes monomethylation of exposed alpha-amino group of Ala or Ser residue in the [Ala/Ser]-Pro-Lys motif and Pro in the Pro-Pro-Lys motif. Predominantly functions as a mono-methyltransferase but is also able to di-/tri-methylate the GPKRIA peptide and di-methylate the PPKRIA peptide (in vitro). May activate NTMT1 by priming its substrates for trimethylation. In Danio rerio (Zebrafish), this protein is N-terminal Xaa-Pro-Lys N-methyltransferase 2 (ntmt2).